The chain runs to 219 residues: uncharacterized protein (219 aa).

The N-terminal stretch at 1 to 17 is a signal peptide; that stretch reads MFKKIIILFLGIFLLSS. A lipid anchor (N-palmitoyl cysteine) is attached at C18. C18 carries S-diacylglycerol cysteine lipidation. The segment at 110-136 is disordered; sequence KAESNATQSNNDMTLSKANKKVRKDDS. Over residues 112–126 the composition is skewed to polar residues; it reads ESNATQSNNDMTLSK. Residues 137–165 are a coiled coil; that stretch reads YKEKKIEEELNQIKAMLRETKRDITKYTC.

It is found in the cell membrane. This is an uncharacterized protein from Rickettsia prowazekii (strain Madrid E).